Here is a 279-residue protein sequence, read N- to C-terminus: Tryptophan synthase alpha chain (279 aa).

Residues E50 and D61 each act as proton acceptor in the active site.

This sequence belongs to the TrpA family. In terms of assembly, tetramer of two alpha and two beta chains.

The enzyme catalyses (1S,2R)-1-C-(indol-3-yl)glycerol 3-phosphate + L-serine = D-glyceraldehyde 3-phosphate + L-tryptophan + H2O. It functions in the pathway amino-acid biosynthesis; L-tryptophan biosynthesis; L-tryptophan from chorismate: step 5/5. The alpha subunit is responsible for the aldol cleavage of indoleglycerol phosphate to indole and glyceraldehyde 3-phosphate. This chain is Tryptophan synthase alpha chain, found in Brucella melitensis biotype 2 (strain ATCC 23457).